Reading from the N-terminus, the 747-residue chain is Histone-lysine N-methyltransferase EZH1 (747 aa).

Positions aspartate 188–phenylalanine 231 are disordered. Residues histidine 194 to valine 211 show a composition bias toward basic and acidic residues. Lysine 327 is covalently cross-linked (Glycyl lysine isopeptide (Lys-Gly) (interchain with G-Cter in SUMO2)). The tract at residues serine 378–glutamine 421 is disordered. Basic and acidic residues predominate over residues glutamate 382–glycine 393. A compositionally biased stretch (polar residues) spans aspartate 395–lysine 414. Positions glutamine 491–lysine 496 match the Nuclear localization signal motif. In terms of domain architecture, CXC spans cysteine 504–serine 606. Residues lysine 613–arginine 728 form the SET domain.

The protein belongs to the class V-like SAM-binding methyltransferase superfamily. Histone-lysine methyltransferase family. EZ subfamily. In terms of assembly, component of the PRC2/EED-EZH1 complex, which includes EED, EZH1, SUZ12, RBBP4 and AEBP2. The PRC2/EED-EZH1 is less abundant than the PRC2/EED-EZH2 complex, has weak methyltransferase activity and compacts chromatin in the absence of the methyltransferase cofactor S-adenosyl-L-methionine (SAM). Interacts with EZHIP; the interaction blocks EZH1 methyltransferase activity.

It localises to the nucleus. It carries out the reaction L-lysyl(27)-[histone H3] + 3 S-adenosyl-L-methionine = N(6),N(6),N(6)-trimethyl-L-lysyl(27)-[histone H3] + 3 S-adenosyl-L-homocysteine + 3 H(+). Polycomb group (PcG) protein. Catalytic subunit of the PRC2/EED-EZH1 complex, which methylates 'Lys-27' of histone H3, leading to transcriptional repression of the affected target gene. Able to mono-, di- and trimethylate 'Lys-27' of histone H3 to form H3K27me1, H3K27me2 and H3K27me3, respectively. Required for embryonic stem cell derivation and self-renewal, suggesting that it is involved in safeguarding embryonic stem cell identity. Compared to EZH2-containing complexes, it is less abundant in embryonic stem cells, has weak methyltransferase activity and plays a less critical role in forming H3K27me3, which is required for embryonic stem cell identity and proper differentiation. The sequence is that of Histone-lysine N-methyltransferase EZH1 (EZH1) from Pongo abelii (Sumatran orangutan).